Reading from the N-terminus, the 446-residue chain is tRNA (guanine-N(7)-)-methyltransferase non-catalytic subunit TRM82 (446 aa).

Positions L67–K97 are disordered. Residues S87 to K97 show a composition bias toward low complexity. 3 WD repeats span residues P107 to C147, G202 to H243, and G247 to K287.

Belongs to the WD repeat TRM82 family. As to quaternary structure, forms a heterodimer with the catalytic subunit TRM8.

Its subcellular location is the nucleus. It functions in the pathway tRNA modification; N(7)-methylguanine-tRNA biosynthesis. Functionally, required for the formation of N(7)-methylguanine at position 46 (m7G46) in tRNA. In the complex, it is required to stabilize and induce conformational changes of the catalytic subunit. The polypeptide is tRNA (guanine-N(7)-)-methyltransferase non-catalytic subunit TRM82 (Debaryomyces hansenii (strain ATCC 36239 / CBS 767 / BCRC 21394 / JCM 1990 / NBRC 0083 / IGC 2968) (Yeast)).